Consider the following 429-residue polypeptide: Bifunctional protein GlmU (429 aa).

Positions 1 to 223 are pyrophosphorylase; it reads MKTSILILAA…EDEFMGINDK (223 aa). UDP-N-acetyl-alpha-D-glucosamine contacts are provided by residues 8–11, Lys-22, and 81–82; these read LAAG and GT. Position 102 (Asp-102) interacts with Mg(2+). Gly-135, Glu-149, Asn-164, and Asn-221 together coordinate UDP-N-acetyl-alpha-D-glucosamine. Asn-221 is a binding site for Mg(2+). The segment at 224–244 is linker; the sequence is FELSIAENFMQKKIKKYWMQQ. Residues 245–429 are N-acetyltransferase; sequence GVIFHLPQST…KDYYYKKFQK (185 aa). Residues Arg-308 and Lys-325 each contribute to the UDP-N-acetyl-alpha-D-glucosamine site. His-336 serves as the catalytic Proton acceptor. UDP-N-acetyl-alpha-D-glucosamine is bound by residues Tyr-339 and Asn-350. Acetyl-CoA contacts are provided by residues 359–360, Ser-378, Ala-396, and Arg-413; that span reads NY.

It in the N-terminal section; belongs to the N-acetylglucosamine-1-phosphate uridyltransferase family. In the C-terminal section; belongs to the transferase hexapeptide repeat family. As to quaternary structure, homotrimer. Mg(2+) is required as a cofactor.

It is found in the cytoplasm. It catalyses the reaction alpha-D-glucosamine 1-phosphate + acetyl-CoA = N-acetyl-alpha-D-glucosamine 1-phosphate + CoA + H(+). It carries out the reaction N-acetyl-alpha-D-glucosamine 1-phosphate + UTP + H(+) = UDP-N-acetyl-alpha-D-glucosamine + diphosphate. It participates in nucleotide-sugar biosynthesis; UDP-N-acetyl-alpha-D-glucosamine biosynthesis; N-acetyl-alpha-D-glucosamine 1-phosphate from alpha-D-glucosamine 6-phosphate (route II): step 2/2. It functions in the pathway nucleotide-sugar biosynthesis; UDP-N-acetyl-alpha-D-glucosamine biosynthesis; UDP-N-acetyl-alpha-D-glucosamine from N-acetyl-alpha-D-glucosamine 1-phosphate: step 1/1. Its pathway is bacterial outer membrane biogenesis; LPS lipid A biosynthesis. Catalyzes the last two sequential reactions in the de novo biosynthetic pathway for UDP-N-acetylglucosamine (UDP-GlcNAc). The C-terminal domain catalyzes the transfer of acetyl group from acetyl coenzyme A to glucosamine-1-phosphate (GlcN-1-P) to produce N-acetylglucosamine-1-phosphate (GlcNAc-1-P), which is converted into UDP-GlcNAc by the transfer of uridine 5-monophosphate (from uridine 5-triphosphate), a reaction catalyzed by the N-terminal domain. This chain is Bifunctional protein GlmU, found in Campylobacter jejuni subsp. jejuni serotype O:2 (strain ATCC 700819 / NCTC 11168).